Consider the following 282-residue polypeptide: DNA-dependent metalloprotease WSS1 homolog 2 (282 aa).

The region spanning 1 to 75 is the Ubiquitin-like domain; it reads MELKFSCRGN…CLIRQDKDIV (75 aa). The WLM domain occupies 99-274; sequence PHTTPKPASI…LLAAAERRKQ (176 aa). Residue histidine 202 participates in Zn(2+) binding. Glutamate 203 is an active-site residue. Zn(2+) is bound by residues histidine 206 and histidine 212. Residues 234–282 form a disordered region; that stretch reads GKPGSYVSDRASYTPQQDNDDEDQKNHRRDLLLAAAERRKQSGSKVQKE. Basic and acidic residues predominate over residues 269-282; sequence AERRKQSGSKVQKE.

It belongs to the peptidase M3 family. WSS1-like metalloprotease (WLM) subfamily. The cofactor is Zn(2+).

It is found in the cytoplasm. Its subcellular location is the nucleus. In terms of biological role, metalloendopeptidase that acts selectively on DNA-binding proteins. DNA is needed to bring the protease and substrates together to enable proteolysis. Involved in the repair of toxic DNA-protein cross-links (DPCs) such as covalently trapped topoisomerase 1 (TOP1) adducts on DNA lesions or DPCs induced by reactive compounds such as formaldehyde. The chain is DNA-dependent metalloprotease WSS1 homolog 2 from Schizosaccharomyces pombe (strain 972 / ATCC 24843) (Fission yeast).